We begin with the raw amino-acid sequence, 339 residues long: Probable geranylgeranyl transferase type-2 subunit beta (339 aa).

PFTB repeat units lie at residues 24 to 65, 72 to 113, 120 to 161, 168 to 209, 216 to 257, and 264 to 306; these read IDKH…YLLK, KNEV…IQYD, INSV…SLLK, CEKA…SILN, IDKL…SAID, and NDKL…SLMG. Residues 194–196 and 236–248 each bind geranylgeranyl diphosphate; these read HAG and RPEK…YSWW. Zn(2+)-binding residues include Asp-242, Cys-244, and His-294.

The protein belongs to the protein prenyltransferase subunit beta family. Heterodimer of an alpha and a beta subunit. Zn(2+) serves as cofactor.

It carries out the reaction geranylgeranyl diphosphate + L-cysteinyl-[protein] = S-geranylgeranyl-L-cysteinyl-[protein] + diphosphate. Catalyzes the transfer of a geranyl-geranyl moiety from geranyl-geranyl pyrophosphate to both cysteines in Rab proteins with an -XXCC, -XCXC and -CCXX C-terminal. The protein is Probable geranylgeranyl transferase type-2 subunit beta (rabggtb) of Dictyostelium discoideum (Social amoeba).